A 126-amino-acid chain; its full sequence is L-alanine exporter AlaE (126 aa).

Residues 23-43 traverse the membrane as a helical segment; the sequence is FALVVYCFFTGMAIEILLSGM.

It belongs to the AlaE exporter family.

The protein resides in the cell inner membrane. Functionally, exports L-alanine. This Sodalis glossinidius (strain morsitans) protein is L-alanine exporter AlaE.